A 141-amino-acid polypeptide reads, in one-letter code: Large ribosomal subunit protein uL11 (141 aa).

Belongs to the universal ribosomal protein uL11 family. In terms of assembly, part of the ribosomal stalk of the 50S ribosomal subunit. Interacts with L10 and the large rRNA to form the base of the stalk. L10 forms an elongated spine to which L12 dimers bind in a sequential fashion forming a multimeric L10(L12)X complex. One or more lysine residues are methylated.

Forms part of the ribosomal stalk which helps the ribosome interact with GTP-bound translation factors. In Nautilia profundicola (strain ATCC BAA-1463 / DSM 18972 / AmH), this protein is Large ribosomal subunit protein uL11.